Here is a 175-residue protein sequence, read N- to C-terminus: MVSLKDSHFDLFHLPAQFALDDAALDDAYRTVQTQVHPDRFAAAGDAQKRIAMQWATRANEAYRTLRDPLQRASYLLSLRGVDIGAENNTAMEPAFLMQQMEWREGIEDAAAARNVDALDALLAELRDEKRVRIERLGTLLDSGADQAAAEAVRQLMFIERVASEVGAQIERLET.

Residues 7 to 79 (SHFDLFHLPA…LQRASYLLSL (73 aa)) form the J domain.

It belongs to the HscB family. In terms of assembly, interacts with HscA and stimulates its ATPase activity.

In terms of biological role, co-chaperone involved in the maturation of iron-sulfur cluster-containing proteins. Seems to help targeting proteins to be folded toward HscA. The chain is Co-chaperone protein HscB homolog from Burkholderia vietnamiensis (strain G4 / LMG 22486) (Burkholderia cepacia (strain R1808)).